A 1883-amino-acid chain; its full sequence is Transmembrane protein 131 (1883 aa).

An N-terminal signal peptide occupies residues 1–22; it reads MGKRAGGGATGATTAAVSTSAG. Topologically, residues 23–1117 are lumenal; it reads AGLEPAAARS…AEALPRPNWE (1095 aa). Positions 109 to 283 are papD-L domain; the sequence is RFEPPMLDFH…ETKGVMRASF (175 aa). Asparagine 300 is a glycosylation site (N-linked (GlcNAc...) asparagine). The residue at position 803 (serine 803) is a Phosphoserine. A helical membrane pass occupies residues 1118-1138; sequence LALYIIISGIMSALFLLVIGT. The Cytoplasmic segment spans residues 1139–1883; that stretch reads AYLEAQGIWE…WSNSHFPHEN (745 aa). Disordered stretches follow at residues 1198-1580, 1593-1656, 1670-1712, 1766-1789, and 1832-1858; these read GAGG…DSLY, LKQR…KNGN, PGGN…PVSN, WESP…HTAT, and MGTE…TYNP. Low complexity predominate over residues 1237 to 1261; that stretch reads AKNSSSTSSRTSAQAASSQSANKTS. Over residues 1302 to 1316 the composition is skewed to pro residues; the sequence is PQPPLPPPVPQPQEP. Serine 1322 and serine 1342 each carry phosphoserine. Composition is skewed to basic and acidic residues over residues 1330-1343 and 1353-1364; these read SHPE…HSSE and AMDKDFDHHDSP. Serine 1375 carries the post-translational modification Phosphoserine. The segment covering 1380-1394 has biased composition (basic residues); it reads SKGKGKPLQRKVKPP. Over residues 1395-1417 the composition is skewed to basic and acidic residues; it reads KKQEEKEKKGKGKPQEDELKDSL. Residues 1423 to 1434 are compositionally biased toward low complexity; it reads SSTTTETSNPDT. Residues 1436 to 1458 show a composition bias toward basic and acidic residues; it reads PLLKEDTEKQKGKQAMPEKHESE. Polar residues-rich tracts occupy residues 1510–1526 and 1542–1553; these read AMTS…TKGT and PNSQELGNTSSS. Positions 1602-1611 are enriched in pro residues; that stretch reads PASPSPPAAP. Low complexity predominate over residues 1619 to 1630; sequence SYSSIVNSSSSS. Positions 1678–1690 are enriched in polar residues; that stretch reads VSSNKTGFSSSLG. Low complexity-rich tracts occupy residues 1773–1784 and 1837–1849; these read PSPSWPASSGSP and SPAP…SSPA. Serine 1863 and serine 1871 each carry phosphoserine.

The protein belongs to the TMEM131 family. In terms of assembly, interacts (via PapD-L domain) with COL1A2 (via C-terminus); the interaction is direct, may occur with other collagen proteins, and is involved in assembly and TRAPPIII ER-to-Golgi transport complex-dependent secretion of collagen. Interacts (via C-terminus) with TRAPPC8 (via C-terminus); the interaction is direct.

The protein resides in the membrane. Collagen binding transmembrane protein involved in collagen secretion by recruiting the ER-to-Golgi transport complex TRAPPIII. May play a role in the immune response to viral infection. The chain is Transmembrane protein 131 from Homo sapiens (Human).